We begin with the raw amino-acid sequence, 132 residues long: Small ribosomal subunit protein uS8 (132 aa).

The protein belongs to the universal ribosomal protein uS8 family. As to quaternary structure, part of the 30S ribosomal subunit. Contacts proteins S5 and S12.

One of the primary rRNA binding proteins, it binds directly to 16S rRNA central domain where it helps coordinate assembly of the platform of the 30S subunit. In Desulfitobacterium hafniense (strain DSM 10664 / DCB-2), this protein is Small ribosomal subunit protein uS8.